A 364-amino-acid chain; its full sequence is Succinate--CoA ligase [ADP-forming] subunit beta (364 aa).

The 221-residue stretch at 9-229 (KNIFKKYGIP…EFEEYKNKEK (221 aa)) folds into the ATP-grasp domain. ATP is bound by residues Lys-43, 50 to 52 (GRG), Glu-89, Leu-92, and Glu-97. Mg(2+) is bound by residues Asn-189 and Asp-203. Residues Asn-246 and 303–305 (GIT) contribute to the substrate site.

This sequence belongs to the succinate/malate CoA ligase beta subunit family. As to quaternary structure, heterotetramer of two alpha and two beta subunits. It depends on Mg(2+) as a cofactor.

It catalyses the reaction succinate + ATP + CoA = succinyl-CoA + ADP + phosphate. The catalysed reaction is GTP + succinate + CoA = succinyl-CoA + GDP + phosphate. It participates in carbohydrate metabolism; tricarboxylic acid cycle; succinate from succinyl-CoA (ligase route): step 1/1. In terms of biological role, succinyl-CoA synthetase functions in the citric acid cycle (TCA), coupling the hydrolysis of succinyl-CoA to the synthesis of either ATP or GTP and thus represents the only step of substrate-level phosphorylation in the TCA. The beta subunit provides nucleotide specificity of the enzyme and binds the substrate succinate, while the binding sites for coenzyme A and phosphate are found in the alpha subunit. The protein is Succinate--CoA ligase [ADP-forming] subunit beta of Methanocaldococcus jannaschii (strain ATCC 43067 / DSM 2661 / JAL-1 / JCM 10045 / NBRC 100440) (Methanococcus jannaschii).